A 144-amino-acid polypeptide reads, in one-letter code: Large ribosomal subunit protein uL13 (144 aa).

It belongs to the universal ribosomal protein uL13 family. As to quaternary structure, part of the 50S ribosomal subunit.

In terms of biological role, this protein is one of the early assembly proteins of the 50S ribosomal subunit, although it is not seen to bind rRNA by itself. It is important during the early stages of 50S assembly. The chain is Large ribosomal subunit protein uL13 from Desulfovibrio desulfuricans (strain ATCC 27774 / DSM 6949 / MB).